Here is a 498-residue protein sequence, read N- to C-terminus: Type II secretion system protein E (498 aa).

Position 261 to 268 (261 to 268) interacts with ATP; that stretch reads GPTGSGKS. Residues Cys-394, Cys-397, Cys-425, and Cys-428 each contribute to the Zn(2+) site.

Belongs to the GSP E family. Forms homooligomers; most probably hexamers. Interacts with OutL/GspL. Zn(2+) serves as cofactor.

The protein localises to the cell inner membrane. It carries out the reaction ATP + H2O + cellular proteinSide 1 = ADP + phosphate + cellular proteinSide 2.. ATPase component of the type II secretion system required for the energy-dependent secretion of extracellular factors such as proteases and toxins from the periplasm. Acts as a molecular motor to provide the energy that is required for assembly of the pseudopilus and the extrusion of substrates generated in the cytoplasm. The sequence is that of Type II secretion system protein E (outE) from Pectobacterium carotovorum subsp. carotovorum (Erwinia carotovora subsp. carotovora).